Consider the following 253-residue polypeptide: 3-isopropylmalate dehydratase small subunit 3 (253 aa).

The transit peptide at 1 to 56 (MATSQQFLNPTLFKSLASSNKNSCTLCPSPFLQLKSASTIFNYKPLTSSSATIITR) directs the protein to the chloroplast.

It belongs to the LeuD family. Heterodimer of the large LEUC/IIL1 subunit and the small LEUD (SSU1, SSU2 or SSU3) subunits. As to expression, expressed in vascular bundles of roots, cotyledons and rosette leaves. Expressed in stem vascular bundles which branche off into lateral inflorescences. Expressed in connective tissues in anthers. In hypocotyls, expressed in parenchyma cells surrounding the vasculature. In rosette leaves, expressed in phloem cells and cells close to the xylem along the vascular bundles. In roots of adult plants, expressed in cells closely associated with the stele. In flowering stalks, expressed in parenchyma cells associated with the phloem or the xylem.

It localises to the plastid. The protein resides in the chloroplast stroma. It catalyses the reaction (2R,3S)-3-isopropylmalate = (2S)-2-isopropylmalate. It carries out the reaction a 2-(omega-methylsulfanyl)alkylmalate = a 2-(omega-methylsulfanyl)alkylmaleate + H2O. The catalysed reaction is 2-(3-methylsulfanyl)propylmalate = 2-(2-methylsulfanyl)propylmaleate + H2O. The enzyme catalyses a 3-(omega-methylsulfanyl)alkylmalate = a 2-(omega-methylsulfanyl)alkylmaleate + H2O. It catalyses the reaction 2-(2-methylsulfanyl)ethylmalate = 2-(2-methylsulfanyl)ethylmaleate + H2O. It carries out the reaction 3-(2-methylsulfanyl)ethylmalate = 2-(2-methylsulfanyl)ethylmaleate + H2O. The catalysed reaction is 3-(3-methylsulfanyl)propylmalate = 2-(2-methylsulfanyl)propylmaleate + H2O. It functions in the pathway amino-acid biosynthesis; L-leucine biosynthesis; L-leucine from 3-methyl-2-oxobutanoate: step 2/4. Catalyzes the isomerization between 2-isopropylmalate and 3-isopropylmalate, via the formation of 2-isopropylmaleate. Functions redundantly with LEUD1 in the methionine chain elongation pathway of aliphatic glucosinolate formation. The chain is 3-isopropylmalate dehydratase small subunit 3 from Arabidopsis thaliana (Mouse-ear cress).